A 399-amino-acid polypeptide reads, in one-letter code: Salivary protein Tsal1 (399 aa).

The N-terminal stretch at 1-22 is a signal peptide; sequence MALKLVYGVFTLALLGISSVNA. The N-linked (GlcNAc...) asparagine glycan is linked to Asn-268.

The protein belongs to the DNA/RNA non-specific endonuclease family. A divalent metal cation is required as a cofactor. As to expression, saliva (at protein level).

The protein resides in the secreted. Its function is as follows. Binds double-stranded DNA (dsDNA) with high affinity. Binds double-stranded RNA. Binds single-stranded DNA with lower affinity and with a preference for purine-rich sequences. Shows residual nuclease activity for dsDNA. May facilitate blood meal intake by lowering the local viscosity created by the release of host DNA. This Glossina morsitans morsitans (Savannah tsetse fly) protein is Salivary protein Tsal1.